The chain runs to 226 residues: MGPAPRVLELFYDVLSPYSWLGFEVLCRYQHLWNIKLKLRPALLAGIMKDSGNQPPAMVPHKGQYILKEIPLLKQLFQVPMSVPKDFFGEHVKKGTVNAMRFLTAVSMEQPEMLEKVSRELWMRIWSRDEDITESQNILSAAEKAGMATAQAQHLLNKISTELVKSKLRETTGAACKYGAFGLPTTVAHVDGKTYMLFGSDRMELLAYLLGEKWMGPVPPTLNARL.

16–18 (SPY) contributes to the glutathione binding site. Residues Lys-36 and Lys-49 each carry the N6-succinyllysine modification. Asn-53 is a binding site for glutathione. N6-acetyllysine; alternate is present on residues Lys-68 and Lys-74. Residues Lys-68 and Lys-74 each carry the N6-succinyllysine; alternate modification. N6-acetyllysine is present on Lys-85. An N6-acetyllysine; alternate mark is found at Lys-93 and Lys-116. N6-succinyllysine; alternate occurs at positions 93 and 116. Lys-144 is subject to N6-succinyllysine. Residue Lys-158 is modified to N6-acetyllysine; alternate. Lys-158 is subject to N6-succinyllysine; alternate. Lys-165 is subject to N6-acetyllysine. An N6-acetyllysine; alternate mark is found at Lys-167 and Lys-177. N6-succinyllysine; alternate is present on residues Lys-167 and Lys-177. A glutathione-binding site is contributed by Leu-183. Residue Lys-193 is modified to N6-succinyllysine. A glutathione-binding site is contributed by 200-201 (SD).

This sequence belongs to the GST superfamily. Kappa family. Homodimer.

Its subcellular location is the mitochondrion matrix. The catalysed reaction is RX + glutathione = an S-substituted glutathione + a halide anion + H(+). Functionally, glutathione S-transferase that catalyzes the conjugation of glutathione to exogenous and endogenous compounds. In Rattus norvegicus (Rat), this protein is Glutathione S-transferase kappa 1 (Gstk1).